A 589-amino-acid chain; its full sequence is Glutamine--fructose-6-phosphate aminotransferase [isomerizing] (589 aa).

Cys-2 serves as the catalytic Nucleophile; for GATase activity. In terms of domain architecture, Glutamine amidotransferase type-2 spans 2–221; the sequence is CGIIGIVSLR…DDELGFITPE (220 aa). 2 consecutive SIS domains span residues 286–426 and 445–579; these read VIEE…KMEK and IGEE…PDKP. Lys-584 acts as the For Fru-6P isomerization activity in catalysis.

Homodimer.

It is found in the cytoplasm. The enzyme catalyses D-fructose 6-phosphate + L-glutamine = D-glucosamine 6-phosphate + L-glutamate. Its function is as follows. Catalyzes the first step in hexosamine metabolism, converting fructose-6P into glucosamine-6P using glutamine as a nitrogen source. The sequence is that of Glutamine--fructose-6-phosphate aminotransferase [isomerizing] from Sulfurisphaera tokodaii (strain DSM 16993 / JCM 10545 / NBRC 100140 / 7) (Sulfolobus tokodaii).